The chain runs to 922 residues: Hexokinase-3 (922 aa).

Residues 1 to 23 (MATIGPSGLHPGERASVCPHEGV) form a disordered region. 2 Hexokinase domains span residues 25-469 (RPSG…MVTA) and 475-911 (AAHR…LVTA). Residues 82-218 (HGTEQGDFLV…TYRIDVVAMV (137 aa)) are hexokinase small subdomain 1. 93-100 (ELGATGAS) is an ATP binding site. 93 to 102 (ELGATGASLR) contributes to the D-glucose 6-phosphate binding site. D-glucose is bound by residues S166, 183-184 (TK), and 219-220 (ND). The tract at residues 219–458 (NDTVGTMMGC…CDVSFIPSVD (240 aa)) is hexokinase large subdomain 1. The D-glucose 6-phosphate site is built by D220 and T243. D-glucose-binding positions include N246, E271, and 302–305 (QRFE). Position 424-426 (424-426 (GGR)) interacts with D-glucose 6-phosphate. ATP-binding positions include 436 to 437 (RI) and 540 to 545 (DLGGTN). The segment at 529-660 (DGSERGDFLA…AVELNVVAIV (132 aa)) is hexokinase small subdomain 2. A D-glucose 6-phosphate-binding site is contributed by 540 to 544 (DLGGT). D-glucose is bound by residues 608-609 (SF), 625-626 (TK), and 661-662 (ND). The tract at residues 661-900 (NDTVGTMMSC…CTVTFLQSED (240 aa)) is hexokinase large subdomain 2. The D-glucose 6-phosphate site is built by D662 and T685. An ATP-binding site is contributed by T685. Residues 687-688 (TN), E713, and E747 contribute to the D-glucose site. ATP is bound by residues 752-753 (GM), 789-793 (TKFLS), and 868-872 (TLYKL). D-glucose 6-phosphate-binding positions include 866-868 (DGT) and S902.

Belongs to the hexokinase family.

The enzyme catalyses a D-hexose + ATP = a D-hexose 6-phosphate + ADP + H(+). It catalyses the reaction D-fructose + ATP = D-fructose 6-phosphate + ADP + H(+). It carries out the reaction D-glucose + ATP = D-glucose 6-phosphate + ADP + H(+). It participates in carbohydrate metabolism; hexose metabolism. It functions in the pathway carbohydrate degradation; glycolysis; D-glyceraldehyde 3-phosphate and glycerone phosphate from D-glucose: step 1/4. Hexokinase is an allosteric enzyme inhibited by its product D-glucose 6-phosphate. Catalyzes the phosphorylation of hexose, such as D-glucose and D-fructose, to hexose 6-phosphate (D-glucose 6-phosphate and D-fructose 6-phosphate, respectively). Mediates the initial step of glycolysis by catalyzing phosphorylation of D-glucose to D-glucose 6-phosphate. This chain is Hexokinase-3, found in Mus musculus (Mouse).